Here is a 141-residue protein sequence, read N- to C-terminus: Transcriptional regulator MraZ (141 aa).

SpoVT-AbrB domains lie at 5-47 and 75-118; these read EYNH…PNEE and AADC…SKER.

Belongs to the MraZ family. As to quaternary structure, forms oligomers.

It localises to the cytoplasm. It is found in the nucleoid. The polypeptide is Transcriptional regulator MraZ (Lachnoclostridium phytofermentans (strain ATCC 700394 / DSM 18823 / ISDg) (Clostridium phytofermentans)).